Reading from the N-terminus, the 188-residue chain is dCTP deaminase (188 aa).

Residues 111–116 (KSTYAR), 135–137 (TLE), glutamine 156, tyrosine 170, and glutamine 180 each bind dCTP. The Proton donor/acceptor role is filled by glutamate 137.

It belongs to the dCTP deaminase family. In terms of assembly, homotrimer.

The enzyme catalyses dCTP + H2O + H(+) = dUTP + NH4(+). Its pathway is pyrimidine metabolism; dUMP biosynthesis; dUMP from dCTP (dUTP route): step 1/2. In terms of biological role, catalyzes the deamination of dCTP to dUTP. This chain is dCTP deaminase, found in Chromohalobacter salexigens (strain ATCC BAA-138 / DSM 3043 / CIP 106854 / NCIMB 13768 / 1H11).